The following is a 421-amino-acid chain: E3 ubiquitin-protein ligase RMD5 (421 aa).

The CTLH domain occupies 176–236; it reads EFIEMGQIVH…QIVKHGNPVE (61 aa). The segment at 361-404 adopts an RING-Gid-type zinc-finger fold; the sequence is CPVLKEETTTENPPYSLACHHIISKKALDRLSKNGTITFKCPYC.

This sequence belongs to the RMD5/GID2 family. In terms of assembly, identified in the GID/CTLH complex. In the absence of stress, the complex exists as an inactive anticipatory complex (GID(Ant)), composed of VID30/GID1, the E3 ubiquitin-ligase RMD5/GID2, VID28/GID5, GID8, and the RING-like subunit FYV10/GID9, awaiting a substrate receptor to form the active E3 ligase complex. When cells are shifted to glucose-containing medium, the substrate receptor VID24/GID4 is induced and becomes part of the complex, named GID(SR4). Additionally, GID7 transforms the GID(SR4) E3 ligase core into a higher-order supramolecular assembly (Chelator-GID(SR4)) specifically tailored for FBP1 ubiquitination. Under osmotic or heat stress, the substrate receptor GID10 is induced and becomes part of the complex, named GID(SR10). Within the GID complex, interacts directly with GID8, FYV10/GID9 and VID28/GID5.

Its subcellular location is the cytoplasm. The catalysed reaction is S-ubiquitinyl-[E2 ubiquitin-conjugating enzyme]-L-cysteine + [acceptor protein]-L-lysine = [E2 ubiquitin-conjugating enzyme]-L-cysteine + N(6)-ubiquitinyl-[acceptor protein]-L-lysine.. It functions in the pathway protein modification; protein ubiquitination. E3 ubiquitin-protein ligase component of the GID E3 ligase complex recruiting N termini and catalyzing ubiquitination of proteins targeted for degradation. GID E3 is regulated through assembly with interchangeable N-degron-binding substrate receptors induced by distinct environmental perturbations. Required for the adaptation to the presence of glucose in the growth medium; mediates in association with the substrate receptor VID24/GID4 the degradation of enzymes involved in gluconeogenesis when cells are shifted to glucose-containing medium. Required for proteasome-dependent catabolite degradation of fructose-1,6-bisphosphatase (FBP1), malate dehydrogenase (MDH2), and other gluconeogenic enzymes. This chain is E3 ubiquitin-protein ligase RMD5, found in Saccharomyces cerevisiae (strain ATCC 204508 / S288c) (Baker's yeast).